The sequence spans 64 residues: MTRKILAVLLVFTLVACNNAEKYSETDVEDSPMIQERRCEPSGKPCRPLMRIPCCGSCVRGKCA.

Positions 1-20 (MTRKILAVLLVFTLVACNNA) are cleaved as a signal peptide. Residues 21 to 38 (EKYSETDVEDSPMIQERR) constitute a propeptide that is removed on maturation. 3 disulfide bridges follow: cysteine 39-cysteine 55, cysteine 46-cysteine 58, and cysteine 54-cysteine 63.

It belongs to the neurotoxin 36 family. 02 subfamily. As to expression, expressed by the venom gland.

It is found in the secreted. Probable ion channel inhibitor. The chain is U6-theraphotoxin-Cg1a from Chilobrachys guangxiensis (Chinese earth tiger tarantula).